We begin with the raw amino-acid sequence, 1026 residues long: Multidrug resistance protein MdtC (1026 aa).

10 consecutive transmembrane segments (helical) span residues 12–34 (VATL…LLPV), 336–353 (QSLI…FLFL), 360–382 (AIPA…LCGF), 431–450 (VGFT…LPLL), 463–485 (FAVT…TPML), 525–547 (HARW…YISI), 853–875 (LLLI…ESYV), 895–917 (LEWF…IGIV), 948–970 (LLRF…PLVL), and 985–1007 (TIVG…VYLF).

It belongs to the resistance-nodulation-cell division (RND) (TC 2.A.6) family. MdtC subfamily. As to quaternary structure, part of a tripartite efflux system composed of MdtA, MdtB and MdtC. MdtC forms a heteromultimer with MdtB.

It localises to the cell inner membrane. The sequence is that of Multidrug resistance protein MdtC from Pectobacterium atrosepticum (strain SCRI 1043 / ATCC BAA-672) (Erwinia carotovora subsp. atroseptica).